Here is a 201-residue protein sequence, read N- to C-terminus: Probable quinol oxidase subunit 3 (201 aa).

The next 5 helical transmembrane spans lie at 20 to 40, 62 to 82, 91 to 111, 133 to 153, and 180 to 200; these read LGFW…FATL, LVLI…IAIY, LMLI…GFEI, FFIL…WIIC, and FLDV…MVFS.

Belongs to the cytochrome c oxidase subunit 3 family.

The protein resides in the cell membrane. The enzyme catalyses 2 a quinol + O2 = 2 a quinone + 2 H2O. Its function is as follows. Catalyzes quinol oxidation with the concomitant reduction of oxygen to water. In Staphylococcus saprophyticus subsp. saprophyticus (strain ATCC 15305 / DSM 20229 / NCIMB 8711 / NCTC 7292 / S-41), this protein is Probable quinol oxidase subunit 3 (qoxC).